A 314-amino-acid polypeptide reads, in one-letter code: Thymidylate synthase (314 aa).

DUMP contacts are provided by residues arginine 21 and 176 to 177 (RR). Cysteine 196 functions as the Nucleophile in the catalytic mechanism. DUMP is bound by residues 216-219 (RSAD), asparagine 227, and 257-259 (HLY). Aspartate 219 is a (6R)-5,10-methylene-5,6,7,8-tetrahydrofolate binding site. Serine 313 lines the (6R)-5,10-methylene-5,6,7,8-tetrahydrofolate pocket.

Belongs to the thymidylate synthase family. Bacterial-type ThyA subfamily. Homodimer.

Its subcellular location is the cytoplasm. The catalysed reaction is dUMP + (6R)-5,10-methylene-5,6,7,8-tetrahydrofolate = 7,8-dihydrofolate + dTMP. It functions in the pathway pyrimidine metabolism; dTTP biosynthesis. Catalyzes the reductive methylation of 2'-deoxyuridine-5'-monophosphate (dUMP) to 2'-deoxythymidine-5'-monophosphate (dTMP) while utilizing 5,10-methylenetetrahydrofolate (mTHF) as the methyl donor and reductant in the reaction, yielding dihydrofolate (DHF) as a by-product. This enzymatic reaction provides an intracellular de novo source of dTMP, an essential precursor for DNA biosynthesis. The sequence is that of Thymidylate synthase from Listeria monocytogenes serotype 4b (strain CLIP80459).